Reading from the N-terminus, the 323-residue chain is ADP-L-glycero-D-manno-heptose-6-epimerase (323 aa).

NADP(+) is bound by residues F10–I11, D31–N32, K38, R53, M75–S79, and N92. The active-site Proton acceptor is the Y143. Residue K147 coordinates NADP(+). Position 170 (N170) interacts with substrate. NADP(+)-binding residues include V171 and K179. The active-site Proton acceptor is the K179. Substrate contacts are provided by residues D181, K188, F202–C205, R216, and Y281.

It belongs to the NAD(P)-dependent epimerase/dehydratase family. HldD subfamily. In terms of assembly, homopentamer. NADP(+) serves as cofactor.

The enzyme catalyses ADP-D-glycero-beta-D-manno-heptose = ADP-L-glycero-beta-D-manno-heptose. The protein operates within nucleotide-sugar biosynthesis; ADP-L-glycero-beta-D-manno-heptose biosynthesis; ADP-L-glycero-beta-D-manno-heptose from D-glycero-beta-D-manno-heptose 7-phosphate: step 4/4. Catalyzes the interconversion between ADP-D-glycero-beta-D-manno-heptose and ADP-L-glycero-beta-D-manno-heptose via an epimerization at carbon 6 of the heptose. The polypeptide is ADP-L-glycero-D-manno-heptose-6-epimerase (Nitratidesulfovibrio vulgaris (strain DP4) (Desulfovibrio vulgaris)).